Reading from the N-terminus, the 315-residue chain is Olfactory receptor 4A8 (315 aa).

Residues 1–24 (MRQNNNITEFVLLGFSQYPDVQNA) lie on the Extracellular side of the membrane. Asn-6 is a glycosylation site (N-linked (GlcNAc...) asparagine). The chain crosses the membrane as a helical span at residues 25–45 (LFVMFLLIYIVTMVGNLLIVV). At 46–57 (SIIASPFLGSPV) the chain is on the cytoplasmic side. A helical transmembrane segment spans residues 58 to 80 (YFFLACLSFIDAVYSTTISPVLI). Residues 81–95 (VDLLCDKKTISFPAC) are Extracellular-facing. A disulfide bridge connects residues Cys-95 and Cys-177. Residues 96–116 (MGQLFIEHLFGDTDVFLLVVM) form a helical membrane-spanning segment. Topologically, residues 117–139 (AYDRYVATCKPLRYLTIMNRQVC) are cytoplasmic. The helical transmembrane segment at 140–160 (ILLLVVAVTGGFLHSVFQILV) threads the bilayer. The Extracellular segment spans residues 161-193 (VYSLPFCGPNVIYHFFCNIYPLLDLECTDTYFV). A helical membrane pass occupies residues 194–214 (GLAVVFNGGAICMVIFTLLLI). Topologically, residues 215-235 (SYGVILNSLKTYSPEGRHKAP) are cytoplasmic. The helical transmembrane segment at 236–256 (FICSSHFIMVILFFVPCIFLY) threads the bilayer. At 257–266 (VRPVSNFPID) the chain is on the extracellular side. A helical membrane pass occupies residues 267-287 (KFLTVFYSVITPKLNPFIYML). Topologically, residues 288 to 315 (RNSEMRNAIENLLGYQSGKTGFRCSKLN) are cytoplasmic.

This sequence belongs to the G-protein coupled receptor 1 family.

The protein localises to the cell membrane. Its function is as follows. Odorant receptor. This Homo sapiens (Human) protein is Olfactory receptor 4A8 (OR4A8).